Here is a 31-residue protein sequence, read N- to C-terminus: Cytochrome b6-f complex subunit 6 (31 aa).

A helical membrane pass occupies residues 3–23; that stretch reads TITSYFGFLLAALTITPALFI.

The protein belongs to the PetL family. In terms of assembly, the 4 large subunits of the cytochrome b6-f complex are cytochrome b6, subunit IV (17 kDa polypeptide, PetD), cytochrome f and the Rieske protein, while the 4 small subunits are PetG, PetL, PetM and PetN. The complex functions as a dimer.

It is found in the plastid. The protein localises to the chloroplast thylakoid membrane. Component of the cytochrome b6-f complex, which mediates electron transfer between photosystem II (PSII) and photosystem I (PSI), cyclic electron flow around PSI, and state transitions. PetL is important for photoautotrophic growth as well as for electron transfer efficiency and stability of the cytochrome b6-f complex. This chain is Cytochrome b6-f complex subunit 6, found in Zea mays (Maize).